Here is a 374-residue protein sequence, read N- to C-terminus: Isopentenyl-diphosphate delta-isomerase (374 aa).

13 to 14 contributes to the substrate binding site; it reads RK. FMN-binding positions include 71 to 73, Ser104, and Asn132; that span reads GMT. 104-106 is a binding site for substrate; it reads SQR. Substrate is bound at residue Gln171. Mg(2+) is bound at residue Glu172. FMN-binding positions include Lys203, Thr233, 282–284, and 303–304; these read GMR and AL.

The protein belongs to the IPP isomerase type 2 family. As to quaternary structure, homooctamer. Dimer of tetramers. It depends on FMN as a cofactor. Requires NADPH as cofactor. Mg(2+) serves as cofactor.

It localises to the cytoplasm. The catalysed reaction is isopentenyl diphosphate = dimethylallyl diphosphate. In terms of biological role, involved in the biosynthesis of isoprenoids. Catalyzes the 1,3-allylic rearrangement of the homoallylic substrate isopentenyl (IPP) to its allylic isomer, dimethylallyl diphosphate (DMAPP). This is Isopentenyl-diphosphate delta-isomerase from Thermococcus onnurineus (strain NA1).